We begin with the raw amino-acid sequence, 158 residues long: Cyclic pyranopterin monophosphate synthase (158 aa).

Residues 75 to 77 (LCH) and 113 to 114 (ME) contribute to the substrate site. Asp128 is an active-site residue.

Belongs to the MoaC family. Homohexamer; trimer of dimers.

The catalysed reaction is (8S)-3',8-cyclo-7,8-dihydroguanosine 5'-triphosphate = cyclic pyranopterin phosphate + diphosphate. It functions in the pathway cofactor biosynthesis; molybdopterin biosynthesis. Catalyzes the conversion of (8S)-3',8-cyclo-7,8-dihydroguanosine 5'-triphosphate to cyclic pyranopterin monophosphate (cPMP). This chain is Cyclic pyranopterin monophosphate synthase, found in Pasteurella multocida (strain Pm70).